We begin with the raw amino-acid sequence, 129 residues long: Follitropin subunit beta (129 aa).

Positions 1-20 (MKTLQFFFLFCCWKAICCNS) are cleaved as a signal peptide. Intrachain disulfides connect Cys21/Cys69, Cys35/Cys84, Cys38/Cys122, Cys46/Cys100, Cys50/Cys102, and Cys105/Cys112. Residues Asn25 and Asn42 are each glycosylated (N-linked (GlcNAc...) asparagine).

This sequence belongs to the glycoprotein hormones subunit beta family. In terms of assembly, heterodimer. The active follitropin is a heterodimer composed of an alpha chain/CGA shared with other hormones and a unique beta chain/FSHB shown here.

It is found in the secreted. Its function is as follows. Together with the alpha chain CGA constitutes follitropin, the follicle-stimulating hormone, and provides its biological specificity to the hormone heterodimer. Binds FSHR, a G protein-coupled receptor, on target cells to activate downstream signaling pathways. Follitropin is involved in follicle development and spermatogenesis in reproductive organs. This Pan troglodytes (Chimpanzee) protein is Follitropin subunit beta (FSHB).